The sequence spans 340 residues: Phosphate acyltransferase (340 aa).

The protein belongs to the PlsX family. As to quaternary structure, homodimer. Probably interacts with PlsY.

It is found in the cytoplasm. It carries out the reaction a fatty acyl-[ACP] + phosphate = an acyl phosphate + holo-[ACP]. The protein operates within lipid metabolism; phospholipid metabolism. Catalyzes the reversible formation of acyl-phosphate (acyl-PO(4)) from acyl-[acyl-carrier-protein] (acyl-ACP). This enzyme utilizes acyl-ACP as fatty acyl donor, but not acyl-CoA. This is Phosphate acyltransferase from Clostridioides difficile (strain 630) (Peptoclostridium difficile).